A 331-amino-acid polypeptide reads, in one-letter code: Very-long-chain 3-oxoacyl-CoA reductase (331 aa).

A helical transmembrane segment spans residues 15 to 35 (VQWALAGVGALYISAKVLSYL). V60, D115, D123, N142, Y209, K213, I242, and S244 together coordinate NADP(+). The Proton donor role is filled by Y209. K213 functions as the Lowers pKa of active site Tyr in the catalytic mechanism.

The protein belongs to the short-chain dehydrogenases/reductases (SDR) family.

The protein localises to the endoplasmic reticulum membrane. It carries out the reaction a very-long-chain (3R)-3-hydroxyacyl-CoA + NADP(+) = a very-long-chain 3-oxoacyl-CoA + NADPH + H(+). It functions in the pathway lipid metabolism; fatty acid biosynthesis. In terms of biological role, component of the microsomal membrane bound fatty acid elongation system, which produces the 26-carbon very long-chain fatty acids (VLCFA) from palmitate. Catalyzes the reduction of the 3-ketoacyl-CoA intermediate that is formed in each cycle of fatty acid elongation. VLCFAs serve as precursors for ceramide and sphingolipids. The chain is Very-long-chain 3-oxoacyl-CoA reductase from Pyricularia oryzae (strain 70-15 / ATCC MYA-4617 / FGSC 8958) (Rice blast fungus).